A 1444-amino-acid polypeptide reads, in one-letter code: Probable chitinase LysM18 (1444 aa).

2 consecutive LysM domains span residues 256-302 (STVQ…HFCC) and 321-369 (TTYT…IICL). In terms of domain architecture, Chitin-binding type-1 spans 382-450 (NAECGPQVPG…TNGCISNCGT (69 aa)). Disulfide bonds link Cys385–Cys413, Cys407–Cys419, Cys412–Cys426, and Cys444–Cys448. The 371-residue stretch at 461–831 (YRKVGFYEGF…STSWTKFTSD (371 aa)) folds into the GH18 domain. Glu582 acts as the Proton donor in catalysis. Positions 583 and 808 each coordinate chitin.

The protein belongs to the glycosyl hydrolase 18 family. Chitinase class V subfamily.

The enzyme catalyses Random endo-hydrolysis of N-acetyl-beta-D-glucosaminide (1-&gt;4)-beta-linkages in chitin and chitodextrins.. Its function is as follows. Probable chitinase involved in the degradation of chitin, a component of the cell walls of fungi and exoskeletal elements of some animals (including worms and arthropods). Might be involved in manipulation of host defenses for successful infection. The sequence is that of Probable chitinase LysM18 from Penicillium expansum (Blue mold rot fungus).